Here is a 560-residue protein sequence, read N- to C-terminus: Chaperonin GroEL 2 (560 aa).

Residues 29 to 32 (TLGP), 86 to 90 (DGTTT), Gly413, 478 to 480 (NAA), and Asp494 contribute to the ATP site.

The protein belongs to the chaperonin (HSP60) family. In terms of assembly, forms a cylinder of 14 subunits composed of two heptameric rings stacked back-to-back. Interacts with the co-chaperonin GroES.

The protein localises to the cytoplasm. The enzyme catalyses ATP + H2O + a folded polypeptide = ADP + phosphate + an unfolded polypeptide.. Its function is as follows. Together with its co-chaperonin GroES, plays an essential role in assisting protein folding. The GroEL-GroES system forms a nano-cage that allows encapsulation of the non-native substrate proteins and provides a physical environment optimized to promote and accelerate protein folding. The protein is Chaperonin GroEL 2 of Trichormus variabilis (strain ATCC 29413 / PCC 7937) (Anabaena variabilis).